The sequence spans 91 residues: Putative methyltransferase YfdM (91 aa).

The protein is Putative methyltransferase YfdM (yfdM) of Escherichia coli (strain K12).